A 421-amino-acid chain; its full sequence is Probable pectate lyase C (421 aa).

Residues Met1–Ala19 form the signal peptide. Asn164 and Asn201 each carry an N-linked (GlcNAc...) asparagine glycan. Residue Arg204 is part of the active site. An EF-hand domain is found at Asn257–Met292. 5 residues coordinate Ca(2+): Asp270, Asp272, Asp274, Thr276, and Glu281. The tract at residues Asp353–Asp376 is disordered. Over residues Thr367–Asp376 the composition is skewed to acidic residues.

This sequence belongs to the polysaccharide lyase 1 family. It depends on Ca(2+) as a cofactor.

It localises to the secreted. The catalysed reaction is Eliminative cleavage of (1-&gt;4)-alpha-D-galacturonan to give oligosaccharides with 4-deoxy-alpha-D-galact-4-enuronosyl groups at their non-reducing ends.. Pectinolytic enzyme consist of four classes of enzymes: pectin lyase, polygalacturonase, pectin methylesterase and rhamnogalacturonase. Among pectinolytic enzymes, pectin lyase is the most important in depolymerization of pectin, since it cleaves internal glycosidic bonds of highly methylated pectins. Favors pectate, the anion, over pectin, the methyl ester. This Emericella nidulans (strain FGSC A4 / ATCC 38163 / CBS 112.46 / NRRL 194 / M139) (Aspergillus nidulans) protein is Probable pectate lyase C (plyC).